The primary structure comprises 64 residues: Small ribosomal subunit protein eS17 (64 aa).

This sequence belongs to the eukaryotic ribosomal protein eS17 family.

This is Small ribosomal subunit protein eS17 from Halorubrum lacusprofundi (strain ATCC 49239 / DSM 5036 / JCM 8891 / ACAM 34).